The chain runs to 90 residues: MSENQTEKLVRTLSGRVVSDKMDKTVTVLVERKVKHPLIGKVVRRSNKFHAHDENNECKEGDLVMIEESRPLSKTKTWRVSKIVEKARIV.

This sequence belongs to the universal ribosomal protein uS17 family. Part of the 30S ribosomal subunit.

In terms of biological role, one of the primary rRNA binding proteins, it binds specifically to the 5'-end of 16S ribosomal RNA. This is Small ribosomal subunit protein uS17 from Methylobacillus flagellatus (strain ATCC 51484 / DSM 6875 / VKM B-1610 / KT).